The sequence spans 298 residues: N-acetylmuramic acid 6-phosphate etherase (298 aa).

An SIS domain is found at 54 to 217 (CISAIKNHGR…STVTMIKLGK (164 aa)). The active-site Proton donor is Glu-82. Glu-113 is a catalytic residue.

It belongs to the GCKR-like family. MurNAc-6-P etherase subfamily. As to quaternary structure, homodimer.

The enzyme catalyses N-acetyl-D-muramate 6-phosphate + H2O = N-acetyl-D-glucosamine 6-phosphate + (R)-lactate. The protein operates within amino-sugar metabolism; N-acetylmuramate degradation. Specifically catalyzes the cleavage of the D-lactyl ether substituent of MurNAc 6-phosphate, producing GlcNAc 6-phosphate and D-lactate. The sequence is that of N-acetylmuramic acid 6-phosphate etherase from Petrotoga mobilis (strain DSM 10674 / SJ95).